The sequence spans 417 residues: uncharacterized protein (417 aa).

A helical transmembrane segment spans residues 10–30; that stretch reads ALVCFSILSILVLACGCVNTP. The segment at 84–106 is disordered; the sequence is QENHPLQSNQNYEQTNGNFNEEN. Polar residues predominate over residues 86-106; the sequence is NHPLQSNQNYEQTNGNFNEEN. The chain crosses the membrane as a helical span at residues 148-168; the sequence is LYYIKVIDPIVGGLAGIDIYV.

The protein resides in the cell membrane. This is an uncharacterized protein from Methanocaldococcus jannaschii (strain ATCC 43067 / DSM 2661 / JAL-1 / JCM 10045 / NBRC 100440) (Methanococcus jannaschii).